We begin with the raw amino-acid sequence, 548 residues long: Esterase-5A (548 aa).

The signal sequence occupies residues 1–21; it reads MHLVRWLICLIQLWVQLGAAG. A disulfide bond links cysteine 87 and cysteine 106. N-linked (GlcNAc...) asparagine glycans are attached at residues asparagine 95 and asparagine 116. The active-site Acyl-ester intermediate is serine 210. A disulfide bond links cysteine 262 and cysteine 274. N-linked (GlcNAc...) asparagine glycosylation occurs at asparagine 479. A disulfide bridge links cysteine 518 with cysteine 539.

This sequence belongs to the type-B carboxylesterase/lipase family.

It localises to the secreted. The catalysed reaction is a carboxylic ester + H2O = an alcohol + a carboxylate + H(+). The polypeptide is Esterase-5A (Est-5A) (Drosophila pseudoobscura pseudoobscura (Fruit fly)).